Reading from the N-terminus, the 398-residue chain is Homocysteine-responsive endoplasmic reticulum-resident ubiquitin-like domain member 2 protein (398 aa).

The region spanning 11 to 90 (VTLVIKAPNQ…HMVHLVCASR (80 aa)) is the Ubiquitin-like domain. Disordered stretches follow at residues 90–143 (RTPP…SIRH) and 212–247 (NQST…NVAP). The segment covering 96-125 (PKASKSSKSMGTSSSGRSSSSGSANPGSTS) has biased composition (low complexity). Residues 233–245 (NPPPNPPRAPPNV) are compositionally biased toward pro residues. A helical membrane pass occupies residues 298-318 (FVMVMGALILVYMHQAGWFPL).

Its subcellular location is the membrane. In terms of biological role, could be involved in the unfolded protein response (UPR) pathway. The sequence is that of Homocysteine-responsive endoplasmic reticulum-resident ubiquitin-like domain member 2 protein (herpud2) from Xenopus laevis (African clawed frog).